A 150-amino-acid polypeptide reads, in one-letter code: MSAKDERAREILRGFKLNWMNLRDAETGKILWQGTEDLSVPGVEHEARVPKKILKCKAVSRELNFSSTEQMEKFRLEQKVYFKGQCLEEWFFEFGFVIPNSTNTWQSLIEAAPESQMMPASVLTGNVIIETKFFDDDLLVSTSRVRLFYV.

The interval Arg-144 to Val-150 is required for association with membranes.

This sequence belongs to the PDE6D/unc-119 family. Interacts with the prenylated catalytic subunits of PDE6, an oligomer composed of two catalytic chains (PDE6A and PDE6B) and two inhibitory chains (gamma); has no effect on enzyme activity but promotes the release of the prenylated enzyme from cell membrane. Interacts with prenylated GRK1 and GRK7. Interacts with prenylated Ras family members, including RAP2A and RAP2C. Interacts with prenylated RHEB and NRAS. Interacts with prenylated HRAS and KRAS. Interacts with RAB13 (prenylated form); dissociates RAB13 from membranes. Interacts with prenylated INPP5E. Interacts with RAB28 (prenylated form); the interaction promotes RAB28 delivery to the photoreceptor outer segments. Interacts with RPGR. Interacts with ARL2. Interacts with ARL3; the interaction occurs specifically with the GTP-bound form of ARL3. Interaction with ARL2 and ARL3 promotes release of farnesylated cargo proteins. In terms of tissue distribution, widely expressed. Detected in various tissues including spleen, prostate gland, testis, ovary, small intestine, colon, retina, and peripheral blood.

It is found in the cytoplasm. The protein localises to the cytosol. It localises to the cytoplasmic vesicle membrane. The protein resides in the cytoskeleton. Its subcellular location is the cilium basal body. In terms of biological role, promotes the release of prenylated target proteins from cellular membranes. Modulates the activity of prenylated or palmitoylated Ras family members by regulating their subcellular location. Required for normal ciliary targeting of farnesylated target proteins, such as INPP5E. Required for RAB28 localization to the cone cell outer segments in the retina. Modulates the subcellular location of target proteins by acting as a GTP specific dissociation inhibitor (GDI). Increases the affinity of ARL3 for GTP by several orders of magnitude. Stabilizes ARL3-GTP by decreasing the nucleotide dissociation rate. The protein is Retinal rod rhodopsin-sensitive cGMP 3',5'-cyclic phosphodiesterase subunit delta (PDE6D) of Homo sapiens (Human).